Here is a 130-residue protein sequence, read N- to C-terminus: Prefoldin subunit alpha (130 aa).

This sequence belongs to the prefoldin subunit alpha family. Heterohexamer of two alpha and four beta subunits.

The protein resides in the cytoplasm. In terms of biological role, molecular chaperone capable of stabilizing a range of proteins. Seems to fulfill an ATP-independent, HSP70-like function in archaeal de novo protein folding. This is Prefoldin subunit alpha from Thermoplasma volcanium (strain ATCC 51530 / DSM 4299 / JCM 9571 / NBRC 15438 / GSS1).